We begin with the raw amino-acid sequence, 225 residues long: Cytidylate kinase (225 aa).

Residue 11-19 (GPAAAGKST) coordinates ATP.

This sequence belongs to the cytidylate kinase family. Type 1 subfamily.

It localises to the cytoplasm. The catalysed reaction is CMP + ATP = CDP + ADP. The enzyme catalyses dCMP + ATP = dCDP + ADP. This Bacillus cereus (strain B4264) protein is Cytidylate kinase.